A 383-amino-acid polypeptide reads, in one-letter code: Transposase InsI for insertion sequence element IS30A (383 aa).

The region spanning 213 to 379 (VNGTPIHERS…TPKEIIERGV (167 aa)) is the Integrase catalytic domain.

It belongs to the transposase IS30 family.

Its function is as follows. Required for the transposition of the insertion element. The chain is Transposase InsI for insertion sequence element IS30A (insI1) from Escherichia coli (strain K12).